Here is a 125-residue protein sequence, read N- to C-terminus: Large ribosomal subunit protein bL12 (125 aa).

The protein belongs to the bacterial ribosomal protein bL12 family. Homodimer. Part of the ribosomal stalk of the 50S ribosomal subunit. Forms a multimeric L10(L12)X complex, where L10 forms an elongated spine to which 2 to 4 L12 dimers bind in a sequential fashion. Binds GTP-bound translation factors.

Its function is as follows. Forms part of the ribosomal stalk which helps the ribosome interact with GTP-bound translation factors. Is thus essential for accurate translation. This Gluconacetobacter diazotrophicus (strain ATCC 49037 / DSM 5601 / CCUG 37298 / CIP 103539 / LMG 7603 / PAl5) protein is Large ribosomal subunit protein bL12.